The chain runs to 140 residues: uncharacterized protein (140 aa).

This is an uncharacterized protein from Neurospora crassa (strain ATCC 24698 / 74-OR23-1A / CBS 708.71 / DSM 1257 / FGSC 987).